The chain runs to 424 residues: Anaerobic glycerol-3-phosphate dehydrogenase subunit B (424 aa).

The protein belongs to the anaerobic G-3-P dehydrogenase subunit B family. Composed of a catalytic GlpA/B dimer and of membrane bound GlpC. FMN serves as cofactor.

The enzyme catalyses a quinone + sn-glycerol 3-phosphate = dihydroxyacetone phosphate + a quinol. Its pathway is polyol metabolism; glycerol degradation via glycerol kinase pathway; glycerone phosphate from sn-glycerol 3-phosphate (anaerobic route): step 1/1. Conversion of glycerol 3-phosphate to dihydroxyacetone. Uses fumarate or nitrate as electron acceptor. The sequence is that of Anaerobic glycerol-3-phosphate dehydrogenase subunit B from Yersinia enterocolitica serotype O:8 / biotype 1B (strain NCTC 13174 / 8081).